A 210-amino-acid polypeptide reads, in one-letter code: Vacuolar protein sorting-associated protein 28 homolog (210 aa).

Residues 1–106 enclose the VPS28 N-terminal domain; that stretch reads MSSQNANLMR…REGRPITVKD (106 aa). The region spanning 110–206 is the VPS28 C-terminal domain; that stretch reads NVLKHIASIV…AYQAFNKALN (97 aa).

This sequence belongs to the VPS28 family. As to quaternary structure, component of the ESCRT-I complex (endosomal sorting complex required for transport I). As to expression, expressed in embryos.

It is found in the endosome. Its function is as follows. Component of the ESCRT-I complex, a regulator of vesicular trafficking process. The sequence is that of Vacuolar protein sorting-associated protein 28 homolog (vps-28) from Caenorhabditis elegans.